Consider the following 483-residue polypeptide: ATP synthase subunit beta (483 aa).

Residue 162–169 coordinates ATP; the sequence is GGAGVGKT.

It belongs to the ATPase alpha/beta chains family. As to quaternary structure, F-type ATPases have 2 components, CF(1) - the catalytic core - and CF(0) - the membrane proton channel. CF(1) has five subunits: alpha(3), beta(3), gamma(1), delta(1), epsilon(1). CF(0) has four main subunits: a(1), b(1), b'(1) and c(9-12).

The protein localises to the cellular thylakoid membrane. The enzyme catalyses ATP + H2O + 4 H(+)(in) = ADP + phosphate + 5 H(+)(out). Produces ATP from ADP in the presence of a proton gradient across the membrane. The catalytic sites are hosted primarily by the beta subunits. This chain is ATP synthase subunit beta, found in Synechocystis sp. (strain ATCC 27184 / PCC 6803 / Kazusa).